We begin with the raw amino-acid sequence, 81 residues long: Anaphase-promoting complex subunit emb-1 (81 aa).

In terms of assembly, the APC/C is probably composed of at least 12 subunits: apc-2, apc-10, apc-11, cdc-26, emb-1, emb-27, emb-30, mat-1, mat-2, mat-3, such-1 and gfi-3. Expressed in germ cells.

Its pathway is protein modification; protein ubiquitination. Functionally, probable component of the anaphase promoting complex/cyclosome (APC/C), a cell cycle-regulated E3 ubiquitin ligase that controls progression through mitosis and the G1 phase of the cell cycle. The APC/C complex acts by mediating ubiquitination and subsequent degradation of target proteins. Developmental role in early embryogenesis and the metaphase to anaphase transition in meiosis and mitosis. May be required for germline proliferation. Required for male tail development and hermaphrodite vulva formation. This Caenorhabditis elegans protein is Anaphase-promoting complex subunit emb-1.